The sequence spans 649 residues: Lipolysis-stimulated lipoprotein receptor (649 aa).

The span at Met-1–Lys-16 shows a compositional bias: gly residues. The disordered stretch occupies residues Met-1 to His-21. The Extracellular segment spans residues Met-1–Asp-259. The Ig-like V-type domain occupies Pro-86–Ala-234. A disulfide bridge links Cys-111 with Cys-218. A helical transmembrane segment spans residues Trp-260–Cys-280. The Cytoplasmic portion of the chain corresponds to Trp-281–Val-649. A Phosphothreonine modification is found at Thr-336. Ser-365, Ser-371, Ser-389, Ser-432, and Ser-436 each carry phosphoserine. The tract at residues Asn-414–Val-649 is disordered. The segment covering Arg-426–Ser-444 has biased composition (basic and acidic residues). Thr-453 carries the post-translational modification Phosphothreonine. Residues Ser-464, Ser-467, and Ser-493 each carry the phosphoserine modification. A Phosphothreonine modification is found at Thr-501. The segment covering Pro-502–Gly-518 has biased composition (polar residues). Phosphoserine occurs at positions 528 and 530. The span at Arg-529–Arg-565 shows a compositional bias: basic and acidic residues. Tyr-535 carries the phosphotyrosine modification. A phosphoserine mark is found at Ser-540 and Ser-579. Residues Arg-589–Glu-609 are compositionally biased toward basic and acidic residues. Ser-631 carries the phosphoserine modification. Lys-638 is covalently cross-linked (Glycyl lysine isopeptide (Lys-Gly) (interchain with G-Cter in ubiquitin)). A phosphoserine mark is found at Ser-643 and Ser-646.

It belongs to the immunoglobulin superfamily. LISCH7 family. In terms of assembly, homotrimer or homotetramer. Assembles into cell-cell contacts. Interacts (via the cytoplasmic domain) with MARVELD2 (via C-terminal cytoplasmic domain); the interaction is required to recruit MARVELD2 to tricellular contacts. Interacts with OCLN. Post-translationally, phosphorylation at Ser-365 by MAPK8/JNK1 and MAPK9/JNK2 may be required for exclusive localization at tricellular tight junstions. In terms of processing, polyubiquitinated at Lys-638 via 'Lys-63'-linked ubiquitin chains; deubiquitinated by USP53.

The protein resides in the cell membrane. The protein localises to the cell junction. It localises to the tight junction. Probable role in the clearance of triglyceride-rich lipoprotein from blood. Binds chylomicrons, LDL and VLDL in presence of free fatty acids and allows their subsequent uptake in the cells. Maintains epithelial barrier function by recruiting MARVELD2/tricellulin to tricellular tight junctions. The protein is Lipolysis-stimulated lipoprotein receptor of Homo sapiens (Human).